The sequence spans 477 residues: MSPQTETKASVGFKAGVKEYKLTYYTPEYQTKDTDILAAFRVTPQPGVPPEEAGAAVAAESSTGTWTTVWTDGLTSLDRYKGRCYRIERVVGEKDQYIAYVAYPLDLFEEGSVTNMFTSIVGNVFGFKALRALRLEDLRIPPAYVKTFQGPPHGIQVERDKLNKYGRPLLGCTIKPKLGLSAKNYGRAVYECLRGGLDFTKDDENVNSQPFMRWRDRFLFCAEALFKAQVETGEIKGHYLNATAGTCEEMIKRAVFARELGVPIVMHDYLTGGFTANTSLAHYCRDNGLLLHIHRAMHAVIDRQKNHGIHFRVLAKALRMSGGDHIHSGTVVGKLEGERDITLGFVDLLRDDFVEQDRSRGIYFTQDWVSLPGVLPVASGGIHVWHMPALTEIFGDDSVLQFGGGTLGHPWGNAPGAVANRVALEACVKARNEGRDLAQEGNQIIREASKWSPELAAACEVWKEIVFNFAAVDVLDK.

A propeptide spanning residues 1–2 (MS) is cleaved from the precursor. N-acetylproline is present on proline 3. Lysine 14 bears the N6,N6,N6-trimethyllysine mark. Substrate is bound by residues asparagine 123 and threonine 173. Lysine 175 (proton acceptor) is an active-site residue. Lysine 177 is a substrate binding site. Lysine 201, aspartate 203, and glutamate 204 together coordinate Mg(2+). N6-carboxylysine is present on lysine 201. Histidine 294 serves as the catalytic Proton acceptor. Arginine 295, histidine 327, and serine 379 together coordinate substrate.

The protein belongs to the RuBisCO large chain family. Type I subfamily. Heterohexadecamer of 8 large chains and 8 small chains; disulfide-linked. The disulfide link is formed within the large subunit homodimers. Mg(2+) serves as cofactor. The disulfide bond which can form in the large chain dimeric partners within the hexadecamer appears to be associated with oxidative stress and protein turnover.

The protein resides in the plastid. Its subcellular location is the chloroplast. The enzyme catalyses 2 (2R)-3-phosphoglycerate + 2 H(+) = D-ribulose 1,5-bisphosphate + CO2 + H2O. It carries out the reaction D-ribulose 1,5-bisphosphate + O2 = 2-phosphoglycolate + (2R)-3-phosphoglycerate + 2 H(+). RuBisCO catalyzes two reactions: the carboxylation of D-ribulose 1,5-bisphosphate, the primary event in carbon dioxide fixation, as well as the oxidative fragmentation of the pentose substrate in the photorespiration process. Both reactions occur simultaneously and in competition at the same active site. This chain is Ribulose bisphosphate carboxylase large chain, found in Nicotiana debneyi (Debney's tobacco).